Consider the following 260-residue polypeptide: Lysine/arginine/ornithine-binding periplasmic protein (260 aa).

An N-terminal signal peptide occupies residues 1 to 22 (MKKSILALSLLVGLSTAASSYA). Residue Asp33 participates in L-arginine binding. Asp33 is a binding site for L-lysine. Asp33 serves as a coordination point for L-ornithine. Cysteines 60 and 67 form a disulfide. Ser91, Ser92, Ser94, Arg99, Thr143, and Asp183 together coordinate L-arginine. The L-ornithine site is built by Ser91, Ser92, Ser94, Arg99, Thr143, and Asp183. 4 residues coordinate L-lysine: Ser92, Ser94, Arg99, and Thr143.

It belongs to the bacterial solute-binding protein 3 family. In terms of assembly, the complex is composed of two ATP-binding proteins (HisP), two transmembrane proteins (HisM and HisQ) and a solute-binding protein (ArgT).

The protein localises to the periplasm. Functionally, part of the ABC transporter complex HisPMQ-ArgT involved in lysine/arginine/ornithine transport. Binds lysine, arginine and ornithine. Stimulates ATPase activity of HisP. The chain is Lysine/arginine/ornithine-binding periplasmic protein (argT) from Escherichia coli (strain K12).